A 189-amino-acid chain; its full sequence is MGFLDFFKKTATLDLIAPISGKVMSIDKVPDEAFAEKIVGDGIAILPTSNELLAPCDGKIGKIFKTNHAFSLETKEGVEIFVHFGINTLNLNGKGFTRVAEEGINVKQGEVIIRLDLEYLKEHSESVITPVVIANSDEVSSIEYSFGRLENDSEYILSSSTVLTEEIRHKISQTKPVIAGKDLVLRVKK.

Positions 31–135 (DEAFAEKIVG…SVITPVVIAN (105 aa)) constitute a PTS EIIA type-1 domain. Zn(2+) contacts are provided by His68 and His83. His83 functions as the Tele-phosphohistidine intermediate; for EIIA activity in the catalytic mechanism. Position 83 is a phosphohistidine; by HPr (His83).

Heterodimer with glycerol kinase (glpk). Requires Zn(2+) as cofactor.

The protein localises to the cytoplasm. Its function is as follows. The phosphoenolpyruvate-dependent sugar phosphotransferase system (sugar PTS), a major carbohydrate active transport system, catalyzes the phosphorylation of incoming sugar substrates concomitantly with their translocation across the cell membrane. The enzyme II complex composed of PtsG and Crr is involved in glucose transport. This chain is PTS system glucose-specific EIIA component (crr), found in Borreliella burgdorferi (strain ATCC 35210 / DSM 4680 / CIP 102532 / B31) (Borrelia burgdorferi).